A 337-amino-acid polypeptide reads, in one-letter code: DNA-directed RNA polymerase subunit alpha (337 aa).

Residues Met-1–Glu-233 form an alpha N-terminal domain (alpha-NTD) region. The alpha C-terminal domain (alpha-CTD) stretch occupies residues Gly-266–Phe-337.

Belongs to the RNA polymerase alpha chain family. In plastids the minimal PEP RNA polymerase catalytic core is composed of four subunits: alpha, beta, beta', and beta''. When a (nuclear-encoded) sigma factor is associated with the core the holoenzyme is formed, which can initiate transcription.

The protein localises to the plastid. It localises to the chloroplast. It catalyses the reaction RNA(n) + a ribonucleoside 5'-triphosphate = RNA(n+1) + diphosphate. Functionally, DNA-dependent RNA polymerase catalyzes the transcription of DNA into RNA using the four ribonucleoside triphosphates as substrates. The sequence is that of DNA-directed RNA polymerase subunit alpha from Ceratophyllum demersum (Rigid hornwort).